Consider the following 538-residue polypeptide: Protein NRT1/ PTR FAMILY 5.11 (538 aa).

2 helical membrane-spanning segments follow: residues 44–64 (FAYF…LGES) and 74–94 (AWTG…DSYL). A Phosphothreonine modification is found at Thr-99. Helical transmembrane passes span 100–120 (IIIS…STMI), 134–154 (TIFF…NPCI), 175–194 (SFFN…TRLV), 204–224 (WSLG…LFLL), 308–328 (IPIW…PTFF), 342–362 (GLLV…VVFI), 389–409 (IGTG…VETK), 424–444 (VWWL…TMVG), 463–483 (ALNL…ISVI), and 507–527 (YFYW…LWFA).

The protein belongs to the major facilitator superfamily. Proton-dependent oligopeptide transporter (POT/PTR) (TC 2.A.17) family. Expressed in shoots and roots.

The protein localises to the membrane. The chain is Protein NRT1/ PTR FAMILY 5.11 (NPF5.11) from Arabidopsis thaliana (Mouse-ear cress).